A 653-amino-acid polypeptide reads, in one-letter code: Leishmanolysin homolog (653 aa).

An N-terminal signal peptide occupies residues 1–44 (MHAPPTATRRSGPRRTHGIMARLVRLAAGVLVVTLVIGALTALS). The propeptide at 45 to 113 (ADDAKTHPHK…ALAGDSAPDV (69 aa)) is activation peptide. 2 cysteine pairs are disulfide-bonded: C138/C155 and C203/C242. H276 contacts Zn(2+). E277 is an active-site residue. Zn(2+) contacts are provided by H280 and H346. Intrachain disulfides connect C326–C398, C405–C468, C418–C437, C427–C502, C479–C524, C529–C579, and C549–C572. Residues N383 and N409 are each glycosylated (N-linked (GlcNAc...) asparagine). N-linked (GlcNAc...) asparagine glycosylation occurs at N569. Residues 590–631 (ESMTNSGSGSSRPAPVEPSGSGSGSSAATTAPSPTRDGSAAA) are disordered. Over residues 591-600 (SMTNSGSGSS) the composition is skewed to polar residues. A compositionally biased stretch (low complexity) spans 607–631 (PSGSGSGSSAATTAPSPTRDGSAAA). S628 carries GPI-anchor amidated serine lipidation. A propeptide spans 629 to 653 (AAADRIAPRTAAVALLALAVAAACV) (removed in mature form).

The protein belongs to the peptidase M8 family. Zn(2+) is required as a cofactor.

It is found in the cell membrane. It catalyses the reaction Preference for hydrophobic residues at P1 and P1' and basic residues at P2' and P3'. A model nonapeptide is cleaved at -Ala-Tyr-|-Leu-Lys-Lys-.. Functionally, plays an integral role during the infection of macrophages in the mammalian host. The chain is Leishmanolysin homolog (gp63) from Crithidia fasciculata.